A 133-amino-acid polypeptide reads, in one-letter code: Small ribosomal subunit protein uS8 (133 aa).

The protein belongs to the universal ribosomal protein uS8 family. In terms of assembly, part of the 30S ribosomal subunit.

Functionally, one of the primary rRNA binding proteins, it binds directly to 16S rRNA central domain where it helps coordinate assembly of the platform of the 30S subunit. The protein is Small ribosomal subunit protein uS8 of Staphylothermus marinus (strain ATCC 43588 / DSM 3639 / JCM 9404 / F1).